The sequence spans 151 residues: Nucleoside diphosphate kinase (151 aa).

K11, F59, R87, T93, R104, and N114 together coordinate ATP. The active-site Pros-phosphohistidine intermediate is H117.

This sequence belongs to the NDK family. In terms of assembly, homotetramer. Mg(2+) is required as a cofactor.

Its subcellular location is the cytoplasm. The enzyme catalyses a 2'-deoxyribonucleoside 5'-diphosphate + ATP = a 2'-deoxyribonucleoside 5'-triphosphate + ADP. It catalyses the reaction a ribonucleoside 5'-diphosphate + ATP = a ribonucleoside 5'-triphosphate + ADP. Major role in the synthesis of nucleoside triphosphates other than ATP. The ATP gamma phosphate is transferred to the NDP beta phosphate via a ping-pong mechanism, using a phosphorylated active-site intermediate. This is Nucleoside diphosphate kinase from Prochlorococcus marinus (strain NATL2A).